A 905-amino-acid polypeptide reads, in one-letter code: Alanine--tRNA ligase (905 aa).

Zn(2+) is bound by residues H595, H599, C696, and H700.

The protein belongs to the class-II aminoacyl-tRNA synthetase family. Requires Zn(2+) as cofactor.

It is found in the cytoplasm. The enzyme catalyses tRNA(Ala) + L-alanine + ATP = L-alanyl-tRNA(Ala) + AMP + diphosphate. Functionally, catalyzes the attachment of alanine to tRNA(Ala) in a two-step reaction: alanine is first activated by ATP to form Ala-AMP and then transferred to the acceptor end of tRNA(Ala). Also edits incorrectly charged Ser-tRNA(Ala) and Gly-tRNA(Ala) via its editing domain. The polypeptide is Alanine--tRNA ligase (Anaeromyxobacter dehalogenans (strain 2CP-C)).